Here is a 146-residue protein sequence, read N- to C-terminus: Large ribosomal subunit protein uL15 (146 aa).

Residues 1–65 (MSDIQLNTLK…GQMPLQRRLP (65 aa)) are disordered. A compositionally biased stretch (gly residues) spans 24–34 (RGIGSGLGKTA).

It belongs to the universal ribosomal protein uL15 family. In terms of assembly, part of the 50S ribosomal subunit.

Its function is as follows. Binds to the 23S rRNA. The polypeptide is Large ribosomal subunit protein uL15 (Bordetella parapertussis (strain 12822 / ATCC BAA-587 / NCTC 13253)).